Consider the following 398-residue polypeptide: Transposase for insertion sequence element ISRM5 (398 aa).

It belongs to the transposase mutator family.

Functionally, required for the transposition of the insertion element. The polypeptide is Transposase for insertion sequence element ISRM5 (Rhizobium meliloti (strain 1021) (Ensifer meliloti)).